A 227-amino-acid polypeptide reads, in one-letter code: 7-cyano-7-deazaguanine synthase (227 aa).

Residue 10–20 (LSGGLDSCVAT) participates in ATP binding. The Zn(2+) site is built by C193, C201, C204, and C207.

The protein belongs to the QueC family. The cofactor is Zn(2+).

The enzyme catalyses 7-carboxy-7-deazaguanine + NH4(+) + ATP = 7-cyano-7-deazaguanine + ADP + phosphate + H2O + H(+). It functions in the pathway purine metabolism; 7-cyano-7-deazaguanine biosynthesis. Catalyzes the ATP-dependent conversion of 7-carboxy-7-deazaguanine (CDG) to 7-cyano-7-deazaguanine (preQ(0)). This chain is 7-cyano-7-deazaguanine synthase, found in Methanobrevibacter smithii (strain ATCC 35061 / DSM 861 / OCM 144 / PS).